Here is a 609-residue protein sequence, read N- to C-terminus: UvrABC system protein C (609 aa).

The region spanning 19–97 (ISPGCYLWKS…IKKHNPRFNV (79 aa)) is the GIY-YIG domain. Residues 208–243 (ESLVGDLSIKMSASSNRMDFEKAARYRDMLQRIQNF) enclose the UVR domain.

It belongs to the UvrC family. Interacts with UvrB in an incision complex.

The protein resides in the cytoplasm. In terms of biological role, the UvrABC repair system catalyzes the recognition and processing of DNA lesions. UvrC both incises the 5' and 3' sides of the lesion. The N-terminal half is responsible for the 3' incision and the C-terminal half is responsible for the 5' incision. This is UvrABC system protein C from Leptospira borgpetersenii serovar Hardjo-bovis (strain JB197).